The chain runs to 159 residues: Putative pre-16S rRNA nuclease (159 aa).

The protein belongs to the YqgF nuclease family.

It is found in the cytoplasm. Its function is as follows. Could be a nuclease involved in processing of the 5'-end of pre-16S rRNA. This chain is Putative pre-16S rRNA nuclease, found in Agrobacterium fabrum (strain C58 / ATCC 33970) (Agrobacterium tumefaciens (strain C58)).